The primary structure comprises 102 residues: Thioredoxin (102 aa).

Residues 2–102 (VTEIKSLKQL…KAKIVQLVSQ (101 aa)) form the Thioredoxin domain. The cysteines at positions 30 and 33 are disulfide-linked.

Belongs to the thioredoxin family.

Participates in various redox reactions through the reversible oxidation of its active center dithiol to a disulfide and catalyzes dithiol-disulfide exchange reactions. This is Thioredoxin (trxA) from Mycoplasma pneumoniae (strain ATCC 29342 / M129 / Subtype 1) (Mycoplasmoides pneumoniae).